Consider the following 204-residue polypeptide: Allatotropin (204 aa).

An N-terminal signal peptide occupies residues 1–20; sequence MNLTMQLAVIVAVCLCLAEG. Residues 21 to 35 constitute a propeptide that is removed on maturation; it reads APDVRLTRTKQQRPT. A disordered region spans residues 47-83; that stretch reads RGFGKRDRPHPRAERDVDHQAPSARPNRGTPTFKSPT. Residue F49 is modified to Phenylalanine amide. Basic and acidic residues predominate over residues 50–65; it reads GKRDRPHPRAERDVDH. Positions 53–204 are excised as a propeptide; that stretch reads DRPHPRAERD…LSSEELLRNF (152 aa).

Expressed extensively in the brain, frontal ganglion and terminal ganglion of the day 2 fifth instar larva (at protein level). Not expressed in the larval brain after day 4 of the fifth instar, or in the brain of the pupa or adult. Expression in the terminal ganglion is localized to cells in the posterior portion of the seventh neuromere of day 2 fifth instar larvae. In the pupa and adult expression is detected in the medial region of neuromere 6, the dorsal medial region of neuromere 7, and the posterior neuromere of the terminal ganglion (at protein level). In the frontal ganglion expression decreases in the wandering larvae and is present at low levels in during pupal ecdysis, but is not detected in the adult. Expressed in the subesophageal ganglion of day 2 fifth instar larva, but not at any time before or after day 2. Not expressed in the abdominal ganglia 1-6 of the day 2 fifth instar larva (at protein level). Expressed in the anterior neuromeres of the pterothoracic ganglion in pupa but not in adult (at protein level). Expressed in the unfused abdominal ganglia of day 10 pupae, and in pharate adult is expressed in median neurosecretory cells M1, M2 and M5, but not in median neurosecretory cells M3 and M4 (at protein level). Not expressed in the differentiated median neurosecretory cells M5 of the larva (at protein level). In the pharate adult brain isoform 3 is the predominant form, with lower levels of isoform 2 and very low levels of isoform 1 detected. In the pharate adult nerve cord isoform 3 is the predominant form, with lower levels of isoform 2 and no isoform 1 detected. In the pharate adult frontal ganglion isoform 3 is expressed, but not isoform 1 and isoform 2.

It localises to the secreted. Functionally, neuropeptide stimulator of juvenile hormone synthesis. Cardioregulatory neurohormone that increases heart beat rate in the adult but not in the larva. Inhibits active ion transport in the midgut of feeding fourth instar and day 2 fifth instar larva, but not in the midgut of pharate or wandering fifth instar larva. The polypeptide is Allatotropin (Manduca sexta (Tobacco hawkmoth)).